A 665-amino-acid chain; its full sequence is Coiled-coil domain-containing protein 138 (665 aa).

Phosphothreonine is present on T48. Phosphoserine is present on S49. Residues 198–323 (QQKFAEELQK…YEFMTIQRLK (126 aa)) are a coiled coil. The residue at position 469 (S469) is a Phosphoserine.

In Homo sapiens (Human), this protein is Coiled-coil domain-containing protein 138 (CCDC138).